The following is a 347-amino-acid chain: S-adenosylmethionine:tRNA ribosyltransferase-isomerase (347 aa).

The protein belongs to the QueA family. As to quaternary structure, monomer.

The protein resides in the cytoplasm. The catalysed reaction is 7-aminomethyl-7-carbaguanosine(34) in tRNA + S-adenosyl-L-methionine = epoxyqueuosine(34) in tRNA + adenine + L-methionine + 2 H(+). Its pathway is tRNA modification; tRNA-queuosine biosynthesis. Functionally, transfers and isomerizes the ribose moiety from AdoMet to the 7-aminomethyl group of 7-deazaguanine (preQ1-tRNA) to give epoxyqueuosine (oQ-tRNA). This chain is S-adenosylmethionine:tRNA ribosyltransferase-isomerase, found in Halalkalibacterium halodurans (strain ATCC BAA-125 / DSM 18197 / FERM 7344 / JCM 9153 / C-125) (Bacillus halodurans).